The primary structure comprises 305 residues: Glycerol-3-phosphate dehydrogenase [NAD(P)+] (305 aa).

Residues phenylalanine 10, arginine 29, and lysine 87 each contribute to the NADPH site. Lysine 87, glycine 115, and serine 117 together coordinate sn-glycerol 3-phosphate. Alanine 119 provides a ligand contact to NADPH. Sn-glycerol 3-phosphate is bound by residues lysine 170, aspartate 223, serine 233, arginine 234, and asparagine 235. Lysine 170 serves as the catalytic Proton acceptor. NADPH is bound at residue arginine 234. Position 255 (glutamate 255) interacts with NADPH.

It belongs to the NAD-dependent glycerol-3-phosphate dehydrogenase family.

The protein resides in the cytoplasm. The enzyme catalyses sn-glycerol 3-phosphate + NAD(+) = dihydroxyacetone phosphate + NADH + H(+). It catalyses the reaction sn-glycerol 3-phosphate + NADP(+) = dihydroxyacetone phosphate + NADPH + H(+). It functions in the pathway membrane lipid metabolism; glycerophospholipid metabolism. In terms of biological role, catalyzes the reduction of the glycolytic intermediate dihydroxyacetone phosphate (DHAP) to sn-glycerol 3-phosphate (G3P), the key precursor for phospholipid synthesis. This Cereibacter sphaeroides (strain ATCC 17023 / DSM 158 / JCM 6121 / CCUG 31486 / LMG 2827 / NBRC 12203 / NCIMB 8253 / ATH 2.4.1.) (Rhodobacter sphaeroides) protein is Glycerol-3-phosphate dehydrogenase [NAD(P)+].